Consider the following 358-residue polypeptide: Gibberellin receptor GID1B (358 aa).

A2 is modified (N-acetylalanine). Residues H113–G115 carry the Involved in the stabilization of the negatively charged intermediate by the formation of the oxyanion hole motif. Residues G115–S116, Y127, and S191 contribute to the gibberellin A4 site. 4 residues coordinate gibberellin A3: S116, Y127, S191, and F238. S191 is an active-site residue. The active site involves D289. G320 lines the gibberellin A4 pocket. G320 serves as a coordination point for gibberellin A3.

Belongs to the 'GDXG' lipolytic enzyme family. In terms of assembly, interacts with the DELLA proteins GAI, RGA, RGL1, RGL2 and RGL3 in a GA-dependent manner. As to expression, widely expressed.

The protein localises to the nucleus. Its function is as follows. Functions as a soluble gibberellin (GA) receptor. GA is an essential hormone that regulates growth and development in plants. Binds with high affinity the biologically active gibberellin GA4, but has no affinity for the biologically inactive GAs. In response to GA, interacts with specific DELLA proteins, known as repressors of GA-induced growth, and targets them for degradation via proteasome. Seems to be required for GA signaling that controls root growth, seed germination and flower development. May function as a dominant GA receptor at low GA concentrations in germination. Partially redundant with GID1A and GID1C. This chain is Gibberellin receptor GID1B (GID1B), found in Arabidopsis thaliana (Mouse-ear cress).